The primary structure comprises 136 residues: MARVTVEDCIEKVENRFELVLLASHRARLLAAGAPLTIDRDRDKNPVVALREIGDETITADDLKEQLIHSMQKYVEVDEPEAETVPLLSSSPAAAAVAPQSSSDDAAVQFDRMSEEDLLRGLENLAPPVETDDEGE.

The segment at 79–107 (EPEAETVPLLSSSPAAAAVAPQSSSDDAA) is disordered. Residues 89–107 (SSSPAAAAVAPQSSSDDAA) are compositionally biased toward low complexity.

Belongs to the RNA polymerase subunit omega family. The RNAP catalytic core consists of 2 alpha, 1 beta, 1 beta' and 1 omega subunit. When a sigma factor is associated with the core the holoenzyme is formed, which can initiate transcription.

It carries out the reaction RNA(n) + a ribonucleoside 5'-triphosphate = RNA(n+1) + diphosphate. In terms of biological role, promotes RNA polymerase assembly. Latches the N- and C-terminal regions of the beta' subunit thereby facilitating its interaction with the beta and alpha subunits. In Methylobacterium radiotolerans (strain ATCC 27329 / DSM 1819 / JCM 2831 / NBRC 15690 / NCIMB 10815 / 0-1), this protein is DNA-directed RNA polymerase subunit omega.